A 405-amino-acid chain; its full sequence is L-carnitine CoA-transferase (405 aa).

Residues K97 and R104 each coordinate CoA. Residue D169 is the Nucleophile of the active site.

The protein belongs to the CoA-transferase III family. CaiB subfamily. Homodimer.

Its subcellular location is the cytoplasm. The enzyme catalyses crotonobetainyl-CoA + (R)-carnitine = crotonobetaine + (R)-carnitinyl-CoA. The catalysed reaction is 4-(trimethylamino)butanoyl-CoA + (R)-carnitine = (R)-carnitinyl-CoA + 4-(trimethylamino)butanoate. It functions in the pathway amine and polyamine metabolism; carnitine metabolism. Its function is as follows. Catalyzes the reversible transfer of the CoA moiety from gamma-butyrobetainyl-CoA to L-carnitine to generate L-carnitinyl-CoA and gamma-butyrobetaine. Is also able to catalyze the reversible transfer of the CoA moiety from gamma-butyrobetainyl-CoA or L-carnitinyl-CoA to crotonobetaine to generate crotonobetainyl-CoA. The chain is L-carnitine CoA-transferase (caiB) from Salmonella typhi.